The following is a 115-amino-acid chain: Thionin-like protein 2 (115 aa).

The N-terminal stretch at 1 to 20 (MLVAVMIVMVIGNLLAQTAA) is a signal peptide.

This sequence belongs to the plant thionin (TC 1.C.44) family. Post-translationally, is disulfide-linked.

The protein localises to the secreted. In terms of biological role, may be involved in plant defense. This is Thionin-like protein 2 from Arabidopsis thaliana (Mouse-ear cress).